A 703-amino-acid polypeptide reads, in one-letter code: Probable boron transporter 2 (703 aa).

Residues 1–35 lie on the Cytoplasmic side of the membrane; that stretch reads MEETFVPFEGIKNDLKGRLMCYKQDWTGGIKAGFR. The chain crosses the membrane as a helical span at residues 36–56; that stretch reads ILAPTTYIFFASAIPVISFGE. At 57–75 the chain is on the extracellular side; sequence QLERSTDGVLTAVQTLAST. A helical membrane pass occupies residues 76–96; the sequence is AICGIIHSIIGGQPLLILGVA. At 97–120 the chain is on the cytoplasmic side; the sequence is EPTVIMYTFMFNFAKGRPELGRNL. Residues 121-141 form a helical membrane-spanning segment; the sequence is FLAWSGWVCVWTSLILFVLAI. The Extracellular portion of the chain corresponds to 142-155; sequence CGACSFINRFTRVA. The helical transmembrane segment at 156 to 176 threads the bilayer; the sequence is GELFGLLIAMLFMQQAIKGLV. The Cytoplasmic segment spans residues 177 to 195; sequence DEFRAPAREDLKLVEFLPS. The chain crosses the membrane as a helical span at residues 196 to 216; that stretch reads WRFANGMFALVLSFGLLITAL. The Extracellular portion of the chain corresponds to 217-233; it reads RSRKARSWRYGTGWLRS. The helical transmembrane segment at 234–254 threads the bilayer; the sequence is LVADYGVPLMVLVWTGVSYIP. Residues 255–289 lie on the Cytoplasmic side of the membrane; the sequence is TGDVPKGIPRRLFSPNPWSPGAYENWTVVKEMLQV. Residues 290-310 form a helical membrane-spanning segment; that stretch reads PIVYIIGAFIPATMIAVLYYF. At 311-337 the chain is on the extracellular side; that stretch reads DHSVASQLAQQKEFNLRKPSSYHYDLL. A helical transmembrane segment spans residues 338-358; that stretch reads LLGFLTLMCGLLGIPPSNGVI. At 359 to 480 the chain is on the cytoplasmic side; the sequence is PQSPMHTKSL…AVMVGGCVAA (122 aa). Residues 481–501 form a helical membrane-spanning segment; sequence MPLLKMIPTSVLWGYFAFMAI. The Extracellular portion of the chain corresponds to 502 to 557; the sequence is ESLPGNQFWERILLLFTAPSRRFKVLEDNHATFVETVPFKTIAMFTIFQTTYLLTC. The helical transmembrane segment at 558 to 578 threads the bilayer; it reads FGLTWIPIAGVMFPLLIMFLI. Topologically, residues 579–703 are cytoplasmic; that stretch reads PVRQYILPRF…SPLNPSSSSK (125 aa). The interval 678–703 is disordered; the sequence is EMSPRLSGKGQNSPKPSPLNPSSSSK.

This sequence belongs to the anion exchanger (TC 2.A.31.3) family.

The protein resides in the membrane. In terms of biological role, probable boron transporter. Boron is essential for maintaining the integrity of plants cell walls. This Arabidopsis thaliana (Mouse-ear cress) protein is Probable boron transporter 2 (BOR2).